Consider the following 270-residue polypeptide: Putative protein-disulfide oxidoreductase RT0103 (270 aa).

A signal peptide spans Met1–Ala17. Positions Ser71 to Glu264 constitute a Thioredoxin domain. A disulfide bond links Cys117 and Cys120.

Belongs to the thioredoxin family. DsbA subfamily.

It localises to the periplasm. Its function is as follows. May be required for disulfide bond formation in some proteins. The protein is Putative protein-disulfide oxidoreductase RT0103 of Rickettsia typhi (strain ATCC VR-144 / Wilmington).